The sequence spans 246 residues: Probable transcriptional regulatory protein GWCH70_2524 (246 aa).

The protein belongs to the TACO1 family.

The protein localises to the cytoplasm. This Geobacillus sp. (strain WCH70) protein is Probable transcriptional regulatory protein GWCH70_2524.